We begin with the raw amino-acid sequence, 132 residues long: Large ribosomal subunit protein uL14 (132 aa).

This sequence belongs to the universal ribosomal protein uL14 family. Part of the 50S ribosomal subunit. Forms a cluster with proteins L3 and L24e, part of which may contact the 16S rRNA in 2 intersubunit bridges.

Its function is as follows. Binds to 23S rRNA. Forms part of two intersubunit bridges in the 70S ribosome. This is Large ribosomal subunit protein uL14 from Methanocorpusculum labreanum (strain ATCC 43576 / DSM 4855 / Z).